Reading from the N-terminus, the 337-residue chain is N-acetyl-gamma-glutamyl-phosphate reductase (337 aa).

Residue Cys149 is part of the active site.

Belongs to the NAGSA dehydrogenase family. Type 1 subfamily.

It is found in the cytoplasm. The enzyme catalyses N-acetyl-L-glutamate 5-semialdehyde + phosphate + NADP(+) = N-acetyl-L-glutamyl 5-phosphate + NADPH + H(+). It functions in the pathway amino-acid biosynthesis; L-arginine biosynthesis; N(2)-acetyl-L-ornithine from L-glutamate: step 3/4. Catalyzes the NADPH-dependent reduction of N-acetyl-5-glutamyl phosphate to yield N-acetyl-L-glutamate 5-semialdehyde. This Wolinella succinogenes (strain ATCC 29543 / DSM 1740 / CCUG 13145 / JCM 31913 / LMG 7466 / NCTC 11488 / FDC 602W) (Vibrio succinogenes) protein is N-acetyl-gamma-glutamyl-phosphate reductase.